A 326-amino-acid chain; its full sequence is ATP phosphoribosyltransferase regulatory subunit (326 aa).

It belongs to the class-II aminoacyl-tRNA synthetase family. HisZ subfamily. As to quaternary structure, heteromultimer composed of HisG and HisZ subunits.

It localises to the cytoplasm. It participates in amino-acid biosynthesis; L-histidine biosynthesis; L-histidine from 5-phospho-alpha-D-ribose 1-diphosphate: step 1/9. Its function is as follows. Required for the first step of histidine biosynthesis. May allow the feedback regulation of ATP phosphoribosyltransferase activity by histidine. The sequence is that of ATP phosphoribosyltransferase regulatory subunit from Streptococcus thermophilus (strain ATCC BAA-491 / LMD-9).